The chain runs to 266 residues: Nuclease (266 aa).

Residues 1 to 21 form the signal peptide; that stretch reads MRFNNKMLALAALLFAAQASA. Cys30 and Cys34 are disulfide-bonded. His110 functions as the Proton acceptor in the catalytic mechanism. Asn140 is a binding site for Mg(2+). A disulfide bond links Cys222 and Cys264.

It belongs to the DNA/RNA non-specific endonuclease family. As to quaternary structure, homodimer. Requires Mg(2+) as cofactor.

The protein resides in the secreted. The enzyme catalyses Endonucleolytic cleavage to 5'-phosphomononucleotide and 5'-phosphooligonucleotide end-products.. Catalyzes the hydrolysis of both DNA and RNA, double- or single-stranded, at the 3'position of the phosphodiester bond to produce 5'-phosphorylated mono-, di-, tri- and tetranucleotides. DNA is a slightly better substrate than RNA. This is Nuclease (nucA) from Serratia marcescens.